A 1150-amino-acid polypeptide reads, in one-letter code: ATP-dependent DNA helicase Q-like 4B (1150 aa).

2 disordered regions span residues 124–143 (TPAI…GSTF) and 154–179 (CAHN…FSSS). Residues 132-142 (TSRTSSTKGST) show a composition bias toward low complexity. Residues 327–361 (DHVEQLHQKRLLLKKQIQQLEILIHNKERKKSQCL) are a coiled coil. The segment covering 416 to 428 (YDISSGSEEREQS) has biased composition (basic and acidic residues). A disordered region spans residues 416 to 446 (YDISSGSEEREQSVSEVIDVTDTESSNDKKW). The 176-residue stretch at 478–653 (INATMSGCDV…VQALGLVNCV (176 aa)) folds into the Helicase ATP-binding domain. ATP is bound at residue 491–498 (MPTGGGKS). The DEAH box signature appears at 597–600 (DEAH). The Helicase C-terminal domain maps to 678-823 (DIDKFIRENH…QMKMGYNCKA (146 aa)). The HRDC domain maps to 1029-1111 (SNLSGILLTA…DSTINDHYKT (83 aa)). Positions 1106–1150 (NDHYKTRPGSGKRRRDENVNPNVAEDDDPDWSASQSHKKVVKNKK) are disordered. Basic residues predominate over residues 1141–1150 (SHKKVVKNKK).

The protein belongs to the helicase family. RecQ subfamily. Mg(2+) serves as cofactor. The cofactor is Mn(2+). Mostly expressed in roots, seedlings, shoots, shoot apical mersitem, flowers, and siliques.

It localises to the nucleus. The catalysed reaction is Couples ATP hydrolysis with the unwinding of duplex DNA by translocating in the 3'-5' direction.. It carries out the reaction ATP + H2O = ADP + phosphate + H(+). In terms of biological role, 3'-5' DNA helicase that may play a role in the repair of DNA. Required to promote but not to suppress crossovers. The protein is ATP-dependent DNA helicase Q-like 4B (RECQL4B) of Arabidopsis thaliana (Mouse-ear cress).